Reading from the N-terminus, the 34-residue chain is MEVNILAFIATALFILVPTAFLLIIYVKTVSQND.

The helical transmembrane segment at 5–25 (ILAFIATALFILVPTAFLLII) threads the bilayer.

The protein belongs to the PsbM family. In terms of assembly, PSII is composed of 1 copy each of membrane proteins PsbA, PsbB, PsbC, PsbD, PsbE, PsbF, PsbH, PsbI, PsbJ, PsbK, PsbL, PsbM, PsbT, PsbX, PsbY, PsbZ, Psb30/Ycf12, at least 3 peripheral proteins of the oxygen-evolving complex and a large number of cofactors. It forms dimeric complexes.

It localises to the plastid. It is found in the chloroplast thylakoid membrane. Its function is as follows. One of the components of the core complex of photosystem II (PSII). PSII is a light-driven water:plastoquinone oxidoreductase that uses light energy to abstract electrons from H(2)O, generating O(2) and a proton gradient subsequently used for ATP formation. It consists of a core antenna complex that captures photons, and an electron transfer chain that converts photonic excitation into a charge separation. This subunit is found at the monomer-monomer interface. The polypeptide is Photosystem II reaction center protein M (Buxus microphylla (Littleleaf boxwood)).